The following is a 691-amino-acid chain: Glycine--tRNA ligase beta subunit (691 aa).

It belongs to the class-II aminoacyl-tRNA synthetase family. Tetramer of two alpha and two beta subunits.

The protein localises to the cytoplasm. The enzyme catalyses tRNA(Gly) + glycine + ATP = glycyl-tRNA(Gly) + AMP + diphosphate. This chain is Glycine--tRNA ligase beta subunit, found in Levilactobacillus brevis (strain ATCC 367 / BCRC 12310 / CIP 105137 / JCM 1170 / LMG 11437 / NCIMB 947 / NCTC 947) (Lactobacillus brevis).